Here is a 346-residue protein sequence, read N- to C-terminus: tRNA N6-adenosine threonylcarbamoyltransferase (346 aa).

Fe cation is bound by residues His-117 and His-121. Substrate-binding positions include 139–143 (VVSGG), Asp-172, Gly-185, Asp-189, and Asn-278. Asp-307 serves as a coordination point for Fe cation.

It belongs to the KAE1 / TsaD family. As to quaternary structure, may form a heterodimer with TsaB. Fe(2+) serves as cofactor.

It localises to the cytoplasm. It carries out the reaction L-threonylcarbamoyladenylate + adenosine(37) in tRNA = N(6)-L-threonylcarbamoyladenosine(37) in tRNA + AMP + H(+). In terms of biological role, required for the formation of a threonylcarbamoyl group on adenosine at position 37 (t(6)A37) in tRNAs that read codons beginning with adenine. Is involved in the transfer of the threonylcarbamoyl moiety of threonylcarbamoyl-AMP (TC-AMP) to the N6 group of A37, together with TsaE and TsaB; this reaction does not require ATP in vitro. TsaD likely plays a direct catalytic role in this reaction. This Bacillus subtilis (strain 168) protein is tRNA N6-adenosine threonylcarbamoyltransferase.